The following is a 241-amino-acid chain: MEFDPAKINTSSIDHVTILQYIDEPNDIRLPVCIIRNINNITYFINITKINPDLANQFRAWKKRIAGRDYMTNLSRDTGIQQSKLTETIRNCQKNRNIYGLYIHYNLVINVVIDWITDVIVQSILRGLVNWYIANNTYNPNTPNSTTISELDIIKILDKYEDVYRVSKEKECGICYEVVYSKRLENDRYFGLLDSCNHIFCITCINIWHRTRRETGASDNCPICRTRFRNITMSKFYKLVN.

The KilA-N domain occupies Tyr21–Trp131. Residues Cys172 to Arg225 form an RING-type zinc finger.

It belongs to the orthopoxvirus OPG021 family.

It is found in the host cytoplasm. It catalyses the reaction S-ubiquitinyl-[E2 ubiquitin-conjugating enzyme]-L-cysteine + [acceptor protein]-L-lysine = [E2 ubiquitin-conjugating enzyme]-L-cysteine + N(6)-ubiquitinyl-[acceptor protein]-L-lysine.. Functionally, RING-finger E3 ubiquitin ligase which catalyzes the formation of both 'Lys-48'- and 'Lys-63'-linked polyubiquitin chains. Plays an important role in virulence by acting as an anti-apoptotic factor. This Ectromelia virus (strain Moscow) (ECTV) protein is Host range factor p28 (OPG021).